A 357-amino-acid polypeptide reads, in one-letter code: DNA replication and repair protein RecF (357 aa).

31-38 is an ATP binding site; that stretch reads GQNGAGKT.

This sequence belongs to the RecF family.

The protein resides in the cytoplasm. Functionally, the RecF protein is involved in DNA metabolism; it is required for DNA replication and normal SOS inducibility. RecF binds preferentially to single-stranded, linear DNA. It also seems to bind ATP. This chain is DNA replication and repair protein RecF, found in Coxiella burnetii (strain CbuK_Q154) (Coxiella burnetii (strain Q154)).